The sequence spans 124 residues: Small ribosomal subunit protein uS13 (124 aa).

The disordered stretch occupies residues 98-124; sequence VRGQRTKTNARTRKGPKRTIAGKKKAR.

This sequence belongs to the universal ribosomal protein uS13 family. As to quaternary structure, part of the 30S ribosomal subunit. Forms a loose heterodimer with protein S19. Forms two bridges to the 50S subunit in the 70S ribosome.

In terms of biological role, located at the top of the head of the 30S subunit, it contacts several helices of the 16S rRNA. In the 70S ribosome it contacts the 23S rRNA (bridge B1a) and protein L5 of the 50S subunit (bridge B1b), connecting the 2 subunits; these bridges are implicated in subunit movement. Contacts the tRNAs in the A and P-sites. In Mycobacterium leprae (strain Br4923), this protein is Small ribosomal subunit protein uS13.